The primary structure comprises 130 residues: Large ribosomal subunit protein bL19 (130 aa).

It belongs to the bacterial ribosomal protein bL19 family.

This protein is located at the 30S-50S ribosomal subunit interface and may play a role in the structure and function of the aminoacyl-tRNA binding site. This is Large ribosomal subunit protein bL19 from Burkholderia lata (strain ATCC 17760 / DSM 23089 / LMG 22485 / NCIMB 9086 / R18194 / 383).